A 325-amino-acid polypeptide reads, in one-letter code: UPF0285 protein MmarC6_0247 (325 aa).

It belongs to the UPF0285 family.

The protein is UPF0285 protein MmarC6_0247 of Methanococcus maripaludis (strain C6 / ATCC BAA-1332).